The sequence spans 354 residues: Fructose-bisphosphate aldolase (354 aa).

Ser-50 is a binding site for D-glyceraldehyde 3-phosphate. Asp-83 serves as the catalytic Proton donor. Zn(2+)-binding residues include His-84, Asp-105, Glu-142, and His-198. Residue Gly-199 participates in dihydroxyacetone phosphate binding. His-232 is a binding site for Zn(2+). Residues 233-235 (GSS) and 275-278 (NIDT) contribute to the dihydroxyacetone phosphate site.

This sequence belongs to the class II fructose-bisphosphate aldolase family. Requires Zn(2+) as cofactor.

It carries out the reaction beta-D-fructose 1,6-bisphosphate = D-glyceraldehyde 3-phosphate + dihydroxyacetone phosphate. It participates in carbohydrate degradation; glycolysis; D-glyceraldehyde 3-phosphate and glycerone phosphate from D-glucose: step 4/4. In terms of biological role, catalyzes the aldol condensation of dihydroxyacetone phosphate (DHAP or glycerone-phosphate) with glyceraldehyde 3-phosphate (G3P) to form fructose 1,6-bisphosphate (FBP) in gluconeogenesis and the reverse reaction in glycolysis. In Pseudomonas aeruginosa (strain ATCC 15692 / DSM 22644 / CIP 104116 / JCM 14847 / LMG 12228 / 1C / PRS 101 / PAO1), this protein is Fructose-bisphosphate aldolase (fba).